The chain runs to 564 residues: Sphingomyelin phosphodiesterase 1 (564 aa).

Residues 1–17 form the signal peptide; that stretch reads MRIIYLISTVLLIYTNA. The Saposin B-type domain maps to 37–121; the sequence is FQPLCISCTG…IILPDCADPT (85 aa). 3 disulfide bridges follow: cysteine 41–cysteine 117, cysteine 44–cysteine 110, and cysteine 72–cysteine 83. N-linked (GlcNAc...) asparagine glycosylation occurs at asparagine 151. Residues aspartate 165 and histidine 167 each coordinate Zn(2+). 2 cysteine pairs are disulfide-bonded: cysteine 180/cysteine 185 and cysteine 186/cysteine 206. Asparagine 221 is a glycosylation site (N-linked (GlcNAc...) asparagine). 2 residues coordinate Zn(2+): aspartate 234 and asparagine 274. A disulfide bond links cysteine 341 and cysteine 389. Asparagine 351 carries N-linked (GlcNAc...) asparagine glycosylation. Positions 381, 415, and 417 each coordinate Zn(2+). A glycan (N-linked (GlcNAc...) asparagine) is linked at asparagine 430. Disulfide bonds link cysteine 538–cysteine 542 and cysteine 548–cysteine 561. Asparagine 556 carries N-linked (GlcNAc...) asparagine glycosylation.

This sequence belongs to the acid sphingomyelinase family. Zn(2+) is required as a cofactor.

It is found in the secreted. The catalysed reaction is a sphingomyelin + H2O = phosphocholine + an N-acylsphing-4-enine + H(+). The enzyme catalyses an N-acyl-15-methylhexadecasphing-4-enine-1-phosphocholine + H2O = an N-acyl-15-methylhexadecasphing-4-enine + phosphocholine + H(+). It participates in lipid metabolism; sphingolipid metabolism. Functionally, sphingomyelin phosphodiesterase (sphingomyelinase) that converts sphingomyelin to ceramide (N-acyl-sphingoid base) and phosphocholine at acidic pH. Displays its enzymatic activity when secreted. May play distinct roles in signaling. The sequence is that of Sphingomyelin phosphodiesterase 1 (asm-1) from Caenorhabditis elegans.